Consider the following 175-residue polypeptide: Archaemetzincin (175 aa).

Residue histidine 125 participates in Zn(2+) binding. The active-site Proton acceptor is glutamate 126. The Zn(2+) site is built by histidine 129, histidine 135, cysteine 136, cysteine 141, cysteine 160, and cysteine 163.

Belongs to the peptidase M54 family. Monomer. It depends on Zn(2+) as a cofactor.

In terms of biological role, probable zinc metalloprotease whose natural substrate is unknown. Does not show endo- or exopeptidase activity against resorufin labeled casein, p-nitroanilide (pNA), amidomethylcoumarin (AMC) (one to three amino acids in length), and hippuryl-aminoacid substrates. This Methanopyrus kandleri (strain AV19 / DSM 6324 / JCM 9639 / NBRC 100938) protein is Archaemetzincin.